We begin with the raw amino-acid sequence, 274 residues long: Large ribosomal subunit protein uL2 (274 aa).

The interval 225 to 274 is disordered; it reads MNPVDHPHGGGEGRSPIGRHPVTPWGKPTLGVKTRKKNKASSKLIIKRRK. Over residues 257–274 the composition is skewed to basic residues; sequence KTRKKNKASSKLIIKRRK.

The protein belongs to the universal ribosomal protein uL2 family. Part of the 50S ribosomal subunit. Forms a bridge to the 30S subunit in the 70S ribosome.

One of the primary rRNA binding proteins. Required for association of the 30S and 50S subunits to form the 70S ribosome, for tRNA binding and peptide bond formation. It has been suggested to have peptidyltransferase activity; this is somewhat controversial. Makes several contacts with the 16S rRNA in the 70S ribosome. This Carboxydothermus hydrogenoformans (strain ATCC BAA-161 / DSM 6008 / Z-2901) protein is Large ribosomal subunit protein uL2.